The following is a 460-amino-acid chain: Bifunctional protein GlmU (460 aa).

The interval 1–229 (MTNYAIILAA…FNESLGVNDR (229 aa)) is pyrophosphorylase. UDP-N-acetyl-alpha-D-glucosamine is bound by residues 8–11 (LAAG), Lys-22, Gln-72, and 77–78 (GT). Mg(2+) is bound at residue Asp-102. Positions 139, 154, 169, and 227 each coordinate UDP-N-acetyl-alpha-D-glucosamine. Asn-227 provides a ligand contact to Mg(2+). Residues 230–250 (VALATAETVMRQRITQKHMVN) form a linker region. The N-acetyltransferase stretch occupies residues 251–460 (GVTFQNPETV…RLAHHPSRSK (210 aa)). Positions 332 and 350 each coordinate UDP-N-acetyl-alpha-D-glucosamine. The active-site Proton acceptor is His-362. UDP-N-acetyl-alpha-D-glucosamine contacts are provided by Tyr-365 and Asn-376. Acetyl-CoA-binding positions include Ala-379, 385 to 386 (NY), Ser-404, Ala-422, and Arg-439.

This sequence in the N-terminal section; belongs to the N-acetylglucosamine-1-phosphate uridyltransferase family. In the C-terminal section; belongs to the transferase hexapeptide repeat family. Homotrimer. It depends on Mg(2+) as a cofactor.

It localises to the cytoplasm. The enzyme catalyses alpha-D-glucosamine 1-phosphate + acetyl-CoA = N-acetyl-alpha-D-glucosamine 1-phosphate + CoA + H(+). The catalysed reaction is N-acetyl-alpha-D-glucosamine 1-phosphate + UTP + H(+) = UDP-N-acetyl-alpha-D-glucosamine + diphosphate. It participates in nucleotide-sugar biosynthesis; UDP-N-acetyl-alpha-D-glucosamine biosynthesis; N-acetyl-alpha-D-glucosamine 1-phosphate from alpha-D-glucosamine 6-phosphate (route II): step 2/2. Its pathway is nucleotide-sugar biosynthesis; UDP-N-acetyl-alpha-D-glucosamine biosynthesis; UDP-N-acetyl-alpha-D-glucosamine from N-acetyl-alpha-D-glucosamine 1-phosphate: step 1/1. The protein operates within bacterial outer membrane biogenesis; LPS lipid A biosynthesis. In terms of biological role, catalyzes the last two sequential reactions in the de novo biosynthetic pathway for UDP-N-acetylglucosamine (UDP-GlcNAc). The C-terminal domain catalyzes the transfer of acetyl group from acetyl coenzyme A to glucosamine-1-phosphate (GlcN-1-P) to produce N-acetylglucosamine-1-phosphate (GlcNAc-1-P), which is converted into UDP-GlcNAc by the transfer of uridine 5-monophosphate (from uridine 5-triphosphate), a reaction catalyzed by the N-terminal domain. This Streptococcus pyogenes serotype M12 (strain MGAS9429) protein is Bifunctional protein GlmU.